Consider the following 287-residue polypeptide: Bifunctional protein FolD (287 aa).

Residues Gly166–Ser168, Ser191, and Ile232 each bind NADP(+).

The protein belongs to the tetrahydrofolate dehydrogenase/cyclohydrolase family. In terms of assembly, homodimer.

It carries out the reaction (6R)-5,10-methylene-5,6,7,8-tetrahydrofolate + NADP(+) = (6R)-5,10-methenyltetrahydrofolate + NADPH. The catalysed reaction is (6R)-5,10-methenyltetrahydrofolate + H2O = (6R)-10-formyltetrahydrofolate + H(+). Its pathway is one-carbon metabolism; tetrahydrofolate interconversion. Its function is as follows. Catalyzes the oxidation of 5,10-methylenetetrahydrofolate to 5,10-methenyltetrahydrofolate and then the hydrolysis of 5,10-methenyltetrahydrofolate to 10-formyltetrahydrofolate. This chain is Bifunctional protein FolD, found in Haemophilus ducreyi (strain 35000HP / ATCC 700724).